We begin with the raw amino-acid sequence, 358 residues long: MREQLLAVERVQAIEWRDGALYLLDQRLLPHRQTWLRFDHAAEVADAIRDMVVRGAPAIGIAAAYGLVLGARARLQAGGDWREALEADFARLEQSRPTAVNLFWALQRMRERLARLKDDGEVLGQLEAEAVGIHASDREANLTMAQLGMELIRKHQGNPQVVLTHCNAGALATGGFGTALGVIRAAHLEGLLEHVYVDETRPWLQGARLTAWELAGDGVPVSLNVDAAAAHLMKTKGITWVIVGADRITANGDVANKIGTYQLAVNAMHHGMRFMVVAPSSTIDMSLESGDDILLEERSGSELLEVAGQPVAADVPAVNPVFDVTPADLVDYIVTEKGVIERPDSTKLAQLMCRKRLH.

Substrate-binding positions include 54-56 (RGA), arginine 96, and glutamine 205. Residue aspartate 246 is the Proton donor of the active site. 256–257 (NK) serves as a coordination point for substrate.

Belongs to the eIF-2B alpha/beta/delta subunits family. MtnA subfamily.

The catalysed reaction is 5-(methylsulfanyl)-alpha-D-ribose 1-phosphate = 5-(methylsulfanyl)-D-ribulose 1-phosphate. It participates in amino-acid biosynthesis; L-methionine biosynthesis via salvage pathway; L-methionine from S-methyl-5-thio-alpha-D-ribose 1-phosphate: step 1/6. Catalyzes the interconversion of methylthioribose-1-phosphate (MTR-1-P) into methylthioribulose-1-phosphate (MTRu-1-P). The polypeptide is Methylthioribose-1-phosphate isomerase (Ectopseudomonas mendocina (strain ymp) (Pseudomonas mendocina)).